Consider the following 883-residue polypeptide: Alanine--tRNA ligase (883 aa).

The Zn(2+) site is built by H563, H567, C677, and H681.

The protein belongs to the class-II aminoacyl-tRNA synthetase family. It depends on Zn(2+) as a cofactor.

The protein resides in the cytoplasm. It carries out the reaction tRNA(Ala) + L-alanine + ATP = L-alanyl-tRNA(Ala) + AMP + diphosphate. Its function is as follows. Catalyzes the attachment of alanine to tRNA(Ala) in a two-step reaction: alanine is first activated by ATP to form Ala-AMP and then transferred to the acceptor end of tRNA(Ala). Also edits incorrectly charged Ser-tRNA(Ala) and Gly-tRNA(Ala) via its editing domain. This is Alanine--tRNA ligase from Cereibacter sphaeroides (strain ATCC 17023 / DSM 158 / JCM 6121 / CCUG 31486 / LMG 2827 / NBRC 12203 / NCIMB 8253 / ATH 2.4.1.) (Rhodobacter sphaeroides).